The sequence spans 226 residues: MSTLGLLIMLLGIIIMCTLVILRSVNPIYSILNLIVIYGCYASILLTVEMEFLACIYILVNVGAIAVLFLFIVMMININIVEIQETMKKYNIYMIVGIIGVVGLLGILITNYQIRIKEEVIADFSMFLINSEVVQLQATPSYLDFYSLFVETTDIRTMGSNVIYGSYSIWFIMACIILLIGMVGVIYITEDLIIEKRTLNERRRQDINSQVLREYKITIRNYRESK.

5 consecutive transmembrane segments (helical) span residues 2-22, 28-48, 56-76, 90-110, and 169-189; these read STLGLLIMLLGIIIMCTLVIL, IYSILNLIVIYGCYASILLTV, IYILVNVGAIAVLFLFIVMMI, YNIYMIVGIIGVVGLLGILIT, and IWFIMACIILLIGMVGVIYIT.

Belongs to the complex I subunit 6 family.

Its subcellular location is the mitochondrion membrane. The catalysed reaction is a ubiquinone + NADH + 5 H(+)(in) = a ubiquinol + NAD(+) + 4 H(+)(out). Core subunit of the mitochondrial membrane respiratory chain NADH dehydrogenase (Complex I) that is believed to belong to the minimal assembly required for catalysis. Complex I functions in the transfer of electrons from NADH to the respiratory chain. The immediate electron acceptor for the enzyme is believed to be ubiquinone. The chain is NADH-ubiquinone oxidoreductase chain 6 (nad6) from Dictyostelium discoideum (Social amoeba).